The following is a 237-amino-acid chain: Alpha-S1-casein (237 aa).

The first 15 residues, 1–15 (MKLLIFSCLVTLALA), serve as a signal peptide directing secretion. The tract at residues 39–60 (EDPIPVSEASSSEESVHQLNRD) is disordered. Phosphoserine occurs at positions 79, 80, and 81.

Belongs to the alpha-casein family. As to expression, mammary gland specific. Secreted in milk.

It is found in the secreted. Important role in the capacity of milk to transport calcium phosphate. This is Alpha-S1-casein (CSN1S1) from Notamacropus eugenii (Tammar wallaby).